Reading from the N-terminus, the 602-residue chain is Myotubularin (602 aa).

Residues Met1 to Asn16 are compositionally biased toward polar residues. Residues Met1–Glu33 form a disordered region. Residues Ser17 to Glu33 are compositionally biased toward basic and acidic residues. A GRAM domain is found at His28 to Gly96. Residues Gly162 to Tyr537 enclose the Myotubularin phosphatase domain. Residues Asn287, Asn312, and Ile313 each coordinate a 1,2-diacyl-sn-glycero-3-phospho-(1D-myo-inositol-3,5-bisphosphate). A 1,2-diacyl-sn-glycero-3-phospho-(1D-myo-inositol-3-phosphate) is bound by residues Asn287, Asn312, and Ile313. Catalysis depends on Cys374, which acts as the Phosphocysteine intermediate. Residues Ser375, Asp376, Gly377, Trp378, Asp379, Arg380, Lys416, and Arg420 each coordinate a 1,2-diacyl-sn-glycero-3-phospho-(1D-myo-inositol-3,5-bisphosphate). A 1,2-diacyl-sn-glycero-3-phospho-(1D-myo-inositol-3-phosphate) is bound by residues Ser375, Asp376, Gly377, Trp378, Asp379, and Arg380. Arg420 serves as a coordination point for a 1,2-diacyl-sn-glycero-3-phospho-(1D-myo-inositol-3-phosphate). Residues Asn577 to Phe602 form a disordered region. Residues Ser584–Phe602 are compositionally biased toward low complexity.

It belongs to the protein-tyrosine phosphatase family. Non-receptor class myotubularin subfamily.

It localises to the cytoplasm. It is found in the cell membrane. Its subcellular location is the cell projection. The protein resides in the filopodium. The protein localises to the ruffle. It localises to the late endosome. It is found in the myofibril. Its subcellular location is the sarcomere. The enzyme catalyses a 1,2-diacyl-sn-glycero-3-phospho-(1D-myo-inositol-3-phosphate) + H2O = a 1,2-diacyl-sn-glycero-3-phospho-(1D-myo-inositol) + phosphate. It carries out the reaction a 1,2-diacyl-sn-glycero-3-phospho-(1D-myo-inositol-3,5-bisphosphate) + H2O = a 1,2-diacyl-sn-glycero-3-phospho-(1D-myo-inositol-5-phosphate) + phosphate. It catalyses the reaction 1,2-dioctanoyl-sn-glycero-3-phospho-(1-D-myo-inositol-3-phosphate) + H2O = 1,2-dioctanoyl-sn-glycero-3-phospho-(1D-myo-inositol) + phosphate. The catalysed reaction is 1,2-dioctanoyl-sn-glycero-3-phospho-(1D-myo-inositol-3,5-bisphosphate) + H2O = 1,2-dioctanoyl-sn-glycero-3-phospho-(1D-myo-inositol-5-phosphate) + phosphate. The enzyme catalyses 1,2-dihexadecanoyl-sn-glycero-3-phospho-(1D-myo-inositol-3,5-phosphate) + H2O = 1,2-dihexadecanoyl-sn-glycero-3-phospho-(1D-myo-inositol-5-phosphate) + phosphate. In terms of biological role, lipid phosphatase which dephosphorylates phosphatidylinositol 3-monophosphate (PI3P) and phosphatidylinositol 3,5-bisphosphate (PI(3,5)P2). In Xenopus laevis (African clawed frog), this protein is Myotubularin (mtm1).